The primary structure comprises 868 residues: Leucine--tRNA ligase (868 aa).

Positions 42–52 (PYPSGKLHMGH) match the 'HIGH' region motif. Positions 627–631 (KMAKS) match the 'KMSKS' region motif. ATP is bound at residue lysine 630.

The protein belongs to the class-I aminoacyl-tRNA synthetase family.

It localises to the cytoplasm. The catalysed reaction is tRNA(Leu) + L-leucine + ATP = L-leucyl-tRNA(Leu) + AMP + diphosphate. The chain is Leucine--tRNA ligase from Pseudomonas fluorescens (strain Pf0-1).